Reading from the N-terminus, the 417-residue chain is UDP-N-acetylglucosamine 1-carboxyvinyltransferase 3 (417 aa).

22 to 23 (KN) serves as a coordination point for phosphoenolpyruvate. Arg92 contacts UDP-N-acetyl-alpha-D-glucosamine. The active-site Proton donor is Cys116. The residue at position 116 (Cys116) is a 2-(S-cysteinyl)pyruvic acid O-phosphothioketal. UDP-N-acetyl-alpha-D-glucosamine-binding positions include 121–125 (RPIDQ), Asp304, and Ile326.

This sequence belongs to the EPSP synthase family. MurA subfamily.

It is found in the cytoplasm. The enzyme catalyses phosphoenolpyruvate + UDP-N-acetyl-alpha-D-glucosamine = UDP-N-acetyl-3-O-(1-carboxyvinyl)-alpha-D-glucosamine + phosphate. It participates in cell wall biogenesis; peptidoglycan biosynthesis. Its function is as follows. Cell wall formation. Adds enolpyruvyl to UDP-N-acetylglucosamine. The protein is UDP-N-acetylglucosamine 1-carboxyvinyltransferase 3 of Caldanaerobacter subterraneus subsp. tengcongensis (strain DSM 15242 / JCM 11007 / NBRC 100824 / MB4) (Thermoanaerobacter tengcongensis).